The following is a 573-amino-acid chain: Potassium-transporting ATPase potassium-binding subunit (573 aa).

10 helical membrane-spanning segments follow: residues I6–I26, F66–L86, A135–I155, V177–V197, I257–V277, G283–I303, I382–F402, M428–I448, I493–L513, and F537–P557.

It belongs to the KdpA family. As to quaternary structure, the system is composed of three essential subunits: KdpA, KdpB and KdpC.

The protein resides in the cell inner membrane. Its function is as follows. Part of the high-affinity ATP-driven potassium transport (or Kdp) system, which catalyzes the hydrolysis of ATP coupled with the electrogenic transport of potassium into the cytoplasm. This subunit binds the periplasmic potassium ions and delivers the ions to the membrane domain of KdpB through an intramembrane tunnel. This Francisella tularensis subsp. mediasiatica (strain FSC147) protein is Potassium-transporting ATPase potassium-binding subunit.